A 948-amino-acid chain; its full sequence is Zinc finger CCCH domain-containing protein 18 (948 aa).

Met-1 carries the post-translational modification N-acetylmethionine. A disordered region spans residues 1–219; sequence MDVAESPELD…SDRKVRPRPT (219 aa). Phosphoserine is present on Ser-6. Positions 15-25 are enriched in acidic residues; it reads EDEEQPALSDD. 8 positions are modified to phosphoserine: Ser-33, Ser-45, Ser-58, Ser-64, Ser-71, Ser-75, Ser-80, and Ser-92. The segment covering 70-86 has biased composition (basic and acidic residues); the sequence is ASEPKSQDQDSEAHELS. Over residues 95-105 the composition is skewed to acidic residues; the sequence is EEGDDVEEDGT. Thr-105 carries the phosphothreonine modification. Ser-106 and Ser-114 each carry phosphoserine. The segment covering 106–120 has biased composition (basic and acidic residues); that stretch reads SDLRDEASSVTRELD. Acidic residues-rich tracts occupy residues 121–132 and 139–154; these read EHELDYDEEVPE and QEEE…EEEK. Residue Ser-169 is modified to Phosphoserine. Positions 177–186 are enriched in basic and acidic residues; the sequence is EAAKEKKKED. Acidic residues predominate over residues 187 to 203; it reads DDGEIDDGEIDDDDLEE. A compositionally biased stretch (basic and acidic residues) spans 204-213; the sequence is GEVKDPSDRK. A C3H1-type zinc finger spans residues 215-241; that stretch reads RPRPTCRFFMKGNCTWGMSCRFIHPGV. Gly-245 carries the post-translational modification Omega-N-methylarginine. Disordered regions lie at residues 272 to 296 and 388 to 922; these read ANPW…TESA and YTEA…TLSR. Basic and acidic residues predominate over residues 392-480; the sequence is EPYHNYRERE…DREKDKEKPK (89 aa). A coiled-coil region spans residues 395–460; that stretch reads HNYRERERER…RERAKRDEKD (66 aa). Residue Ser-483 is modified to Phosphoserine. A Glycyl lysine isopeptide (Lys-Gly) (interchain with G-Cter in SUMO2) cross-link involves residue Lys-506. The segment covering 506 to 516 has biased composition (basic and acidic residues); the sequence is KRADEWKDPWR. 3 positions are modified to phosphoserine: Ser-528, Ser-530, and Ser-532. Low complexity predominate over residues 541 to 602; that stretch reads SASSASASNS…SRSRSFSSSP (62 aa). The span at 603 to 612 shows a compositional bias: pro residues; the sequence is SPSPTPSPHR. Glycyl lysine isopeptide (Lys-Gly) (interchain with G-Cter in SUMO2) cross-links involve residues Lys-618 and Lys-657. Basic and acidic residues predominate over residues 657 to 666; the sequence is KPGDLREARR. Low complexity-rich tracts occupy residues 688 to 721 and 732 to 746; these read GSSY…SVHS and ASPV…PTPA. The span at 756–770 shows a compositional bias: basic and acidic residues; the sequence is KKEDGVREEKRRRDP. Positions 774–804 are enriched in low complexity; it reads PPKSSKAPAGGKASQQAAAPQPAVPGQPQQG. Lys-810 carries the post-translational modification N6-acetyllysine. Lys-813 participates in a covalent cross-link: Glycyl lysine isopeptide (Lys-Gly) (interchain with G-Cter in SUMO2). Residues 820 to 837 show a composition bias toward basic and acidic residues; it reads AADKGSRKRYEPSDKDRQ. A phosphoserine mark is found at Ser-838, Ser-847, Ser-863, Ser-888, and Ser-891. Residues 888-898 show a composition bias toward polar residues; it reads SPQSKGSSKVT. Over residues 902–919 the composition is skewed to low complexity; sequence GKATDTATAGTKSGKAST. Lys-903 participates in a covalent cross-link: Glycyl lysine isopeptide (Lys-Gly) (interchain with G-Cter in SUMO2). Positions 916–945 form a coiled coil; it reads KASTLSRREELLKQLKAVEDAIARKRAKIP.

As to quaternary structure, interacts with ZFC3H1 in a RNase-insensitive manner.

The protein resides in the nucleus. This chain is Zinc finger CCCH domain-containing protein 18 (Zc3h18), found in Mus musculus (Mouse).